A 232-amino-acid polypeptide reads, in one-letter code: 2,3,4,5-tetrahydropyridine-2,6-dicarboxylate N-acetyltransferase (232 aa).

Belongs to the transferase hexapeptide repeat family. DapH subfamily.

It carries out the reaction (S)-2,3,4,5-tetrahydrodipicolinate + acetyl-CoA + H2O = L-2-acetamido-6-oxoheptanedioate + CoA. Its pathway is amino-acid biosynthesis; L-lysine biosynthesis via DAP pathway; LL-2,6-diaminopimelate from (S)-tetrahydrodipicolinate (acetylase route): step 1/3. Catalyzes the transfer of an acetyl group from acetyl-CoA to tetrahydrodipicolinate. The polypeptide is 2,3,4,5-tetrahydropyridine-2,6-dicarboxylate N-acetyltransferase (Kosmotoga olearia (strain ATCC BAA-1733 / DSM 21960 / TBF 19.5.1)).